Reading from the N-terminus, the 412-residue chain is Argininosuccinate synthase (412 aa).

Residues 20–28 and Ala48 each bind ATP; that span reads AYSGGLDTS. 2 residues coordinate L-citrulline: Tyr100 and Ser105. Gly130 lines the ATP pocket. L-aspartate-binding residues include Thr132, Asn136, and Asp137. Asn136 is a binding site for L-citrulline. Residues Arg140, Ser189, Ser198, Glu274, and Tyr286 each coordinate L-citrulline.

It belongs to the argininosuccinate synthase family. Type 1 subfamily. In terms of assembly, homotetramer.

Its subcellular location is the cytoplasm. It carries out the reaction L-citrulline + L-aspartate + ATP = 2-(N(omega)-L-arginino)succinate + AMP + diphosphate + H(+). The protein operates within amino-acid biosynthesis; L-arginine biosynthesis; L-arginine from L-ornithine and carbamoyl phosphate: step 2/3. The protein is Argininosuccinate synthase of Shewanella pealeana (strain ATCC 700345 / ANG-SQ1).